The chain runs to 529 residues: Laccase-1 (529 aa).

A signal peptide spans 1-23; the sequence is MFPGARILATLTLALHLLHGTHA. 3 consecutive Plastocyanin-like domains span residues 25–159, 170–312, and 380–499; these read IGPT…FIVY, DVDN…ILRY, and TAPV…FAED. Asn57 is a glycosylation site (N-linked (GlcNAc...) asparagine). Cu cation-binding residues include His96, His98, His141, and His143. Cystine bridges form between Cys117/Cys514 and Cys149/Cys236. Asn239 and Asn282 each carry an N-linked (GlcNAc...) asparagine glycan. Positions 425, 428, 430, 481, 482, 483, and 487 each coordinate Cu cation.

The protein belongs to the multicopper oxidase family. Requires Cu cation as cofactor.

The protein localises to the secreted. The enzyme catalyses 4 hydroquinone + O2 = 4 benzosemiquinone + 2 H2O. Lignin degradation and detoxification of lignin-derived products. This is Laccase-1 (POX1) from Pleurotus ostreatus (Oyster mushroom).